Consider the following 173-residue polypeptide: Shikimate kinase 1 (173 aa).

An ATP-binding site is contributed by 14 to 19 (GAGKST). A Mg(2+)-binding site is contributed by Ser-18. Residues Asp-36, Arg-60, and Gly-82 each coordinate substrate. Position 120 (Arg-120) interacts with ATP. Substrate is bound at residue Arg-140. Gln-157 lines the ATP pocket.

This sequence belongs to the shikimate kinase family. Monomer. Requires Mg(2+) as cofactor.

The protein resides in the cytoplasm. The catalysed reaction is shikimate + ATP = 3-phosphoshikimate + ADP + H(+). It functions in the pathway metabolic intermediate biosynthesis; chorismate biosynthesis; chorismate from D-erythrose 4-phosphate and phosphoenolpyruvate: step 5/7. In terms of biological role, catalyzes the specific phosphorylation of the 3-hydroxyl group of shikimic acid using ATP as a cosubstrate. This Shigella boydii serotype 18 (strain CDC 3083-94 / BS512) protein is Shikimate kinase 1.